We begin with the raw amino-acid sequence, 160 residues long: Large ribosomal subunit protein eL21 (160 aa).

The protein belongs to the eukaryotic ribosomal protein eL21 family. In terms of assembly, component of the large ribosomal subunit. Mature ribosomes consist of a small (40S) and a large (60S) subunit. The 40S subunit contains about 32 different proteins and 1 molecule of RNA (18S). The 60S subunit contains 45 different proteins and 3 molecules of RNA (25S, 5.8S and 5S).

Its subcellular location is the cytoplasm. Functionally, component of the ribosome, a large ribonucleoprotein complex responsible for the synthesis of proteins in the cell. The small ribosomal subunit (SSU) binds messenger RNAs (mRNAs) and translates the encoded message by selecting cognate aminoacyl-transfer RNA (tRNA) molecules. The large subunit (LSU) contains the ribosomal catalytic site termed the peptidyl transferase center (PTC), which catalyzes the formation of peptide bonds, thereby polymerizing the amino acids delivered by tRNAs into a polypeptide chain. The nascent polypeptides leave the ribosome through a tunnel in the LSU and interact with protein factors that function in enzymatic processing, targeting, and the membrane insertion of nascent chains at the exit of the ribosomal tunnel. The chain is Large ribosomal subunit protein eL21 from Candida albicans (strain SC5314 / ATCC MYA-2876) (Yeast).